A 376-amino-acid polypeptide reads, in one-letter code: 26S proteasome non-ATPase regulatory subunit 13 (376 aa).

The PCI domain occupies 171–338 (SYYKDALRFL…KRVHMTWVQP (168 aa)). N6-acetyllysine is present on Lys-298.

The protein belongs to the proteasome subunit S11 family. In terms of assembly, component of the 19S proteasome regulatory particle complex. The 26S proteasome consists of a 20S core particle (CP) and two 19S regulatory subunits (RP). The regulatory particle is made of a lid composed of 9 subunits including PSMD13, a base containing 6 ATPases and few additional components.

Component of the 26S proteasome, a multiprotein complex involved in the ATP-dependent degradation of ubiquitinated proteins. This complex plays a key role in the maintenance of protein homeostasis by removing misfolded or damaged proteins, which could impair cellular functions, and by removing proteins whose functions are no longer required. Therefore, the proteasome participates in numerous cellular processes, including cell cycle progression, apoptosis, or DNA damage repair. The sequence is that of 26S proteasome non-ATPase regulatory subunit 13 (PSMD13) from Homo sapiens (Human).